A 338-amino-acid chain; its full sequence is Malate dehydrogenase, mitochondrial (338 aa).

Residues 1–24 (MLSALARPASAVLRRSFSTSAQNN) constitute a mitochondrion transit peptide. Residues 31–37 (GASGGIG) and D57 each bind NAD(+). S33 carries O-linked (GlcNAc) serine glycosylation. N6-acetyllysine; alternate is present on residues K78 and K91. An N6-succinyllysine; alternate mark is found at K78 and K91. R104 and R110 together coordinate substrate. NAD(+) is bound by residues N117 and 140–142 (IAN). N142 lines the substrate pocket. K165 carries the N6-acetyllysine modification. R176 contributes to the substrate binding site. K185 carries the post-translational modification N6-acetyllysine; alternate. K185 carries the post-translational modification N6-succinyllysine; alternate. H200 serves as the catalytic Proton acceptor. K203 bears the N6-succinyllysine mark. 2 positions are modified to N6-acetyllysine; alternate: K215 and K239. N6-succinyllysine; alternate occurs at positions 215 and 239. K239 is modified (N6-malonyllysine; alternate). S246 carries the post-translational modification Phosphoserine. M251 contributes to the NAD(+) binding site. N6-succinyllysine is present on K269. 5 positions are modified to N6-acetyllysine; alternate: K296, K301, K307, K314, and K324. An N6-succinyllysine; alternate mark is found at K296, K301, K307, K314, and K324. K307 carries the N6-malonyllysine; alternate modification. The residue at position 326 (S326) is a Phosphoserine. N6-acetyllysine; alternate is present on residues K328, K329, and K335. K328 is subject to N6-succinyllysine; alternate. Residue K329 is modified to N6-malonyllysine; alternate. The residue at position 335 (K335) is an N6-succinyllysine; alternate.

It belongs to the LDH/MDH superfamily. MDH type 1 family. In terms of assembly, homodimer. In terms of processing, acetylation is enhanced after treatment either with trichostin A (TCA) or with nicotinamide (NAM) with the appearance of tri- and tetraacetylations. Glucose also increases acetylation.

The protein resides in the mitochondrion matrix. The catalysed reaction is (S)-malate + NAD(+) = oxaloacetate + NADH + H(+). Its activity is regulated as follows. Enzyme activity is enhanced by acetylation. In Pongo abelii (Sumatran orangutan), this protein is Malate dehydrogenase, mitochondrial (MDH2).